The sequence spans 220 residues: Phosphoserine phosphatase (220 aa).

The Nucleophile role is filled by Asp11. 2 residues coordinate Mg(2+): Asp11 and Asp13. Asp13 acts as the Proton donor in catalysis. Substrate-binding positions include Glu20, Arg56, 99 to 100 (SG), and Lys144. Mg(2+) is bound at residue Asp167. Asn170 is a binding site for substrate.

This sequence belongs to the HAD-like hydrolase superfamily. SerB family. Requires Mg(2+) as cofactor.

It catalyses the reaction O-phospho-L-serine + H2O = L-serine + phosphate. The catalysed reaction is O-phospho-D-serine + H2O = D-serine + phosphate. It participates in amino-acid biosynthesis; L-serine biosynthesis; L-serine from 3-phospho-D-glycerate: step 3/3. The sequence is that of Phosphoserine phosphatase from Idiomarina loihiensis (strain ATCC BAA-735 / DSM 15497 / L2-TR).